Reading from the N-terminus, the 1081-residue chain is Mediator of RNA polymerase II transcription subunit 15 (1081 aa).

Serine 2 bears the N-acetylserine mark. The interval 25–49 (LQVLMDINTLNGGSSDTADKIRIHA) is interaction with GCN4. The tract at residues 238-286 (QAQAQANNNNNGLPQNGNINNNINIPQQQQMQPPNSSANNNPLQQQSSQ) is disordered. Serine 335 bears the Phosphoserine mark. A run of 11 repeats spans residues 422 to 423 (QA), 424 to 425 (QA), 426 to 427 (QA), 428 to 429 (QA), 430 to 431 (QA), 432 to 433 (QA), 434 to 435 (QA), 436 to 437 (QA), 438 to 439 (QA), 440 to 441 (QA), and 442 to 443 (QA). Residues 422-481 (QAQAQAQAQAQAQAQAQAQAQAAQAAQAQAQAQAQAQAQAQAQAQAQAQAQAQAQAQAQA) are 30 X 2 AA approximate tandem repeats of Q-A. A 12; approximate repeat occupies 444–445 (AQ). A 13; approximate repeat occupies 446 to 447 (AA). 17 repeat units span residues 448-449 (QA), 450-451 (QA), 452-453 (QA), 454-455 (QA), 456-457 (QA), 458-459 (QA), 460-461 (QA), 462-463 (QA), 464-465 (QA), 466-467 (QA), 468-469 (QA), 470-471 (QA), 472-473 (QA), 474-475 (QA), 476-477 (QA), 478-479 (QA), and 480-481 (QA). Residues 476–497 (QAQAQAHAQHQPSQQPQQAQQQ) show a composition bias toward low complexity. 2 disordered regions span residues 476-505 (QAQAQAHAQHQPSQQPQQAQQQPNPLHGLT) and 692-712 (QQQQQHIYPSSTPGVANYSAM). A phosphoserine mark is found at serine 736, serine 752, serine 783, serine 785, and serine 789. Residues 744–836 (PVSAAATPSL…KTVQSPMGAQ (93 aa)) are disordered. Polar residues predominate over residues 749-836 (ATPSLNKTIN…KTVQSPMGAQ (88 aa)). Threonine 793 carries the post-translational modification Phosphothreonine. Residues serine 831, serine 1003, serine 1008, serine 1018, and serine 1034 each carry the phosphoserine modification. Positions 1026-1055 (DSKKIKVDSPDDPFMTKSGATTSEKQEVTN) are disordered.

This sequence belongs to the Mediator complex subunit 15 family. In terms of assembly, component of the Mediator complex, which is composed of at least 21 subunits that form three structurally distinct submodules. The Mediator head module contains MED6, MED8, MED11, SRB4/MED17, SRB5/MED18, ROX3/MED19, SRB2/MED20 and SRB6/MED22, the middle module contains MED1, MED4, NUT1/MED5, MED7, CSE2/MED9, NUT2/MED10, SRB7/MED21 and SOH1/MED31, and the tail module contains MED2, PGD1/MED3, RGR1/MED14, GAL11/MED15 and SIN4/MED16. The head and the middle modules interact directly with RNA polymerase II, whereas the elongated tail module interacts with gene-specific regulatory proteins. GAL11/MED15 interacts with the activator GAL4; the interaction is direct. GAL11/MED15 interacts (via multiple regions) with the activator GCN4; the interaction is direct.

The protein localises to the nucleus. In terms of biological role, component of the Mediator complex, a coactivator involved in the regulated transcription of nearly all RNA polymerase II-dependent genes. Mediator functions as a bridge to convey information from gene-specific regulatory proteins to the basal RNA polymerase II transcription machinery. The Mediator complex, having a compact conformation in its free form, is recruited to promoters by direct interactions with regulatory proteins and serves for the assembly of a functional pre-initiation complex with RNA polymerase II and the general transcription factors. The Mediator complex unfolds to an extended conformation and partially surrounds RNA polymerase II, specifically interacting with the unphosphorylated form of the C-terminal domain (CTD) of RNA polymerase II. The Mediator complex dissociates from the RNA polymerase II holoenzyme and stays at the promoter when transcriptional elongation begins. It has an important role in the negative regulation of Ty transcription. The polypeptide is Mediator of RNA polymerase II transcription subunit 15 (Saccharomyces cerevisiae (strain ATCC 204508 / S288c) (Baker's yeast)).